Reading from the N-terminus, the 449-residue chain is Exodeoxyribonuclease 7 large subunit (449 aa).

It belongs to the XseA family. As to quaternary structure, heterooligomer composed of large and small subunits.

The protein resides in the cytoplasm. It carries out the reaction Exonucleolytic cleavage in either 5'- to 3'- or 3'- to 5'-direction to yield nucleoside 5'-phosphates.. Functionally, bidirectionally degrades single-stranded DNA into large acid-insoluble oligonucleotides, which are then degraded further into small acid-soluble oligonucleotides. In Latilactobacillus sakei subsp. sakei (strain 23K) (Lactobacillus sakei subsp. sakei), this protein is Exodeoxyribonuclease 7 large subunit.